We begin with the raw amino-acid sequence, 512 residues long: RCC1 domain-containing protein DDB_G0279253 (512 aa).

RCC1 repeat units lie at residues 1 to 56 (MKIY…MIID), 58 to 134 (GDLY…ACDN), 135 to 185 (NGNI…NNNN), 197 to 248 (SGGV…ALSS), 249 to 319 (ENDV…LLDI), 321 to 384 (FKNV…LLTN), 386 to 443 (DKLY…IQVY), and 454 to 512 (NNNI…FILP). Over residues 66-77 (NDSGQLGINSNE) the composition is skewed to polar residues. Disordered regions lie at residues 66–85 (NDSG…QQQQ) and 162–200 (STSN…SGGV). A compositionally biased stretch (low complexity) spans 162–196 (STSNNKNNNNNNNNNNNNNNNNNNNNNNNNNNNNN).

The protein is RCC1 domain-containing protein DDB_G0279253 of Dictyostelium discoideum (Social amoeba).